We begin with the raw amino-acid sequence, 205 residues long: Lymphotoxin-alpha (205 aa).

The first 34 residues, 1-34 (MTPPERLFLSRVRGTPLHLLLLGLLLVLLPGAQG), serve as a signal peptide directing secretion. Thr-41 carries O-linked (GalNAc...) threonine glycosylation. In terms of domain architecture, THD spans 63-205 (PAAHLIGDPS…STVFFGAFAL (143 aa)). Residue Asn-96 is glycosylated (N-linked (GlcNAc...) asparagine).

This sequence belongs to the tumor necrosis factor family. In terms of assembly, homotrimer, and heterotrimer of either two LTB and one LTA subunits or (less prevalent) two LTA and one LTB subunits. Interacts with TNFRSF14.

It is found in the secreted. The protein localises to the membrane. Cytokine that in its homotrimeric form binds to TNFRSF1A/TNFR1, TNFRSF1B/TNFBR and TNFRSF14/HVEM. In its heterotrimeric form with LTB binds to TNFRSF3/LTBR. Lymphotoxin is produced by lymphocytes and is cytotoxic for a wide range of tumor cells in vitro and in vivo. The polypeptide is Lymphotoxin-alpha (LTA) (Macaca mulatta (Rhesus macaque)).